A 66-amino-acid polypeptide reads, in one-letter code: Large ribosomal subunit protein bL33B (66 aa).

The protein belongs to the bacterial ribosomal protein bL33 family.

This Synechococcus sp. (strain CC9605) protein is Large ribosomal subunit protein bL33B.